We begin with the raw amino-acid sequence, 93 residues long: Acylphosphatase (93 aa).

In terms of domain architecture, Acylphosphatase-like spans 6-92; it reads RAHVWVGGKV…EGLTHFEVLR (87 aa). Residues R21 and N39 contribute to the active site.

This sequence belongs to the acylphosphatase family.

It catalyses the reaction an acyl phosphate + H2O = a carboxylate + phosphate + H(+). This is Acylphosphatase (acyP) from Gloeobacter violaceus (strain ATCC 29082 / PCC 7421).